The sequence spans 82 residues: UPF0180 protein BALH_1248 (82 aa).

This sequence belongs to the UPF0180 family.

The protein is UPF0180 protein BALH_1248 of Bacillus thuringiensis (strain Al Hakam).